Here is a 319-residue protein sequence, read N- to C-terminus: HPr kinase/phosphorylase (319 aa).

Catalysis depends on residues His-137 and Lys-158. Residue 152–159 (GDSGVGKS) participates in ATP binding. Residue Ser-159 participates in Mg(2+) binding. Asp-176 acts as the Proton acceptor; for phosphorylation activity. Proton donor; for dephosphorylation activity in catalysis. The segment at 201–210 (MEIRGLGIIN) is important for the catalytic mechanism of both phosphorylation and dephosphorylation. Mg(2+) is bound at residue Glu-202. Arg-243 is an active-site residue. Residues 264–269 (PVRPGR) form an important for the catalytic mechanism of dephosphorylation region.

The protein belongs to the HPrK/P family. In terms of assembly, homohexamer. Mg(2+) serves as cofactor.

The catalysed reaction is [HPr protein]-L-serine + ATP = [HPr protein]-O-phospho-L-serine + ADP + H(+). The enzyme catalyses [HPr protein]-O-phospho-L-serine + phosphate + H(+) = [HPr protein]-L-serine + diphosphate. In terms of biological role, catalyzes the ATP- as well as the pyrophosphate-dependent phosphorylation of a specific serine residue in HPr, a phosphocarrier protein of the phosphoenolpyruvate-dependent sugar phosphotransferase system (PTS). HprK/P also catalyzes the pyrophosphate-producing, inorganic phosphate-dependent dephosphorylation (phosphorolysis) of seryl-phosphorylated HPr (P-Ser-HPr). The sequence is that of HPr kinase/phosphorylase from Treponema pallidum subsp. pallidum (strain SS14).